Consider the following 304-residue polypeptide: MIVGPVISLLLSYFVLVSGASIEPRAAKSTDQPVDVPYDIDEFTQAASLAQQAYCTKGAHDYGLKIGDSTLLWTTGDGSLKQRVNVHHSESLGIVVAFQGTNSISPFSDFHDIQFRPVDPDARYKQYYPKGTKVMNGFQNAYTDDVDTVFKHVEKFKQEKNETRVTVTGHSLGAAMGLLGSMDIALRMNGGLHKAYLFGLPRVGNPTFANFVDKTIGDKLHWVVNGGDWVPLVPPRPFGYQHPSNYIWIYPSNSDNWRLYPGQENVHGMLTVPQDVGTSDHLGVYFHSKIGGRSGPCPSQLGGF.

An N-terminal signal peptide occupies residues 1-19; the sequence is MIVGPVISLLLSYFVLVSG. Residues Cys55 and Cys297 are joined by a disulfide bond. An N-linked (GlcNAc...) asparagine glycan is attached at Asn161. The active-site Nucleophile is the Ser171. Residues Asp228 and His281 contribute to the active site.

This sequence belongs to the AB hydrolase superfamily. Lipase family. Class 3 subfamily.

It is found in the secreted. Its subcellular location is the cell wall. The enzyme catalyses a monoacylglycerol + H2O = glycerol + a fatty acid + H(+). It catalyses the reaction a diacylglycerol + H2O = a monoacylglycerol + a fatty acid + H(+). Functionally, secreted lipase involved in Dandruff and seborrheic dermatitis (D/SD) probably via lipase-mediated breakdown of sebaceous lipids and release of irritating free fatty acids. Shows activity against monoglyceride and diglyceride substrates, but not triglyceride substrates and does not exhibit regio-selective production of diacylglycerols. Hydrolyzes distearin, dilinolein, dipalmitoylglycerol and dipalmitolein. Cleaves oleic acid from 1,2 isomers of diolein on both the 1 and the 2 position of the glycerol backbone, resulting mainly in free fatty acids but no monoolein is detected. Shows activity on monoolein and liberates mostly free fatty acids, but can also perform the reverse reaction and produce diolein. The polypeptide is Secreted mono- and diacylglycerol lipase MDL3 (Malassezia globosa (strain ATCC MYA-4612 / CBS 7966) (Dandruff-associated fungus)).